The following is a 122-amino-acid chain: Large ribosomal subunit protein uL14 (122 aa).

Belongs to the universal ribosomal protein uL14 family. In terms of assembly, part of the 50S ribosomal subunit. Forms a cluster with proteins L3 and L19. In the 70S ribosome, L14 and L19 interact and together make contacts with the 16S rRNA in bridges B5 and B8.

In terms of biological role, binds to 23S rRNA. Forms part of two intersubunit bridges in the 70S ribosome. The sequence is that of Large ribosomal subunit protein uL14 from Ruthia magnifica subsp. Calyptogena magnifica.